The sequence spans 1503 residues: Transient receptor potential cation channel subfamily M member 2 (1503 aa).

The disordered stretch occupies residues 1-20 (MEPSALRKAGSEQEEGFEGL). Topologically, residues 1–752 (MEPSALRKAG…WWGQLSVDNG (752 aa)) are cytoplasmic. Positions 174, 179, 302, 333, and 336 each coordinate ADP-D-ribose. Phosphothreonine is present on Thr740. An intramembrane segment occupies 753–769 (LWRVTLCMLAFPLLLTG). Residues 770–795 (LISFREKRLQDVGTPAARARAFFTAP) are Cytoplasmic-facing. A helical membrane pass occupies residues 796–816 (VVVFHLNILSYFAFLCLFAYV). At 817-827 (LMVDFQPVPSW) the chain is on the extracellular side. The chain crosses the membrane as a helical span at residues 828–848 (CECAIYLWLFSLVCEEMRQLF). Positions 843 and 846 each coordinate Ca(2+). The Cytoplasmic portion of the chain corresponds to 849 to 867 (YDPDECGLMKKAALYFSDF). The helical transmembrane segment at 868–888 (WNKLDVGAILLFVAGLTCRLI) threads the bilayer. Asn869 is a binding site for Ca(2+). The Extracellular segment spans residues 889-896 (PATLYPGR). A helical transmembrane segment spans residues 897–917 (VILSLDFILFCLRLMHIFTIS). At 918 to 929 (KTLGPKIIIVKR) the chain is on the cytoplasmic side. The chain crosses the membrane as a helical span at residues 930 to 950 (MMKDVFFFLFLLAVWVVSFGV). At 951-970 (AKQAILIHNERRVDWLFRGA) the chain is on the extracellular side. Positions 971–985 (VYHSYLTIFGQIPGY) form an intramembrane region, pore-forming. The short motif at 979 to 982 (FGQI) is the Selectivity filter element. Over 986 to 1022 (IDGVNFNPEHCSPNGTDPYKPKCPESDATQQRPAFPE) the chain is Extracellular. A disulfide bond links Cys996 and Cys1008. Residues 1023–1044 (WLTVLLLCLYLLFTNILLLNLL) traverse the membrane as a helical segment. Over 1045-1079 (IAMFNYTFQQVQEHTDQIWKFQRHDLIEEYHGRPA) the chain is Cytoplasmic. Glu1073 serves as a coordination point for Ca(2+). The stretch at 1080–1098 (APPPFILLSHLQLFIKRVV) is an intramembrane region. Topologically, residues 1099–1503 (LKTPAKRHKQ…KAAAEFGAHY (405 aa)) are cytoplasmic. The disordered stretch occupies residues 1206–1237 (EADVPTLASQKAAEEPDAEPGGRKKTEEPGDS). The Nudix hydrolase domain occupies 1354–1498 (RWRRNEDGAI…KTLLQKAAAE (145 aa)). Residues Leu1381 and Ser1382 each coordinate ADP-D-ribose. A Nudix box motif is present at residues 1390–1411 (GSREPGEMLPRKLKRILRQEHW). 4 residues coordinate ADP-D-ribose: Asp1431, Arg1433, Tyr1485, and Asn1487.

This sequence belongs to the transient receptor (TC 1.A.4) family. LTrpC subfamily. TRPM2 sub-subfamily. Homotetramer. Isoform 1 can interact with isoform 3. This interaction decreases Ca(2+) influx through isoform 1 and suppresses susceptibility to oxidative stress-induced cell death. In terms of processing, phosphorylation of TRPM2 at Thr-740 by protein kinase C (PKC) counteracts the effect of cytosolic Ca(2+) and elevates the temperature threshold. As to expression, highly expressed in brain and peripheral blood cells, such as neutrophils. Also detected in bone marrow, spleen, heart, liver and lung. Isoform 2 is found in neutrophil granulocytes.

Its subcellular location is the cell membrane. The protein localises to the perikaryon. It is found in the cell projection. The protein resides in the cytoplasmic vesicle. It localises to the lysosome. The enzyme catalyses Ca(2+)(in) = Ca(2+)(out). It catalyses the reaction Na(+)(in) = Na(+)(out). Its activity is regulated as follows. Activated by intracellular ADP-ribose, beta-NAD (NAD(+)) and similar compounds, and by oxidative stress caused by reactive oxygen or nitrogen species. Ca(2+) and PI(4,5)P2 are required for channel opening by ADP-ribose. Activation by ADP-ribose and beta-NAD is strongly increased by moderate heat (35 to 40 degrees Celsius). Likewise, reactive oxygen species lower the threshold for activation by moderate heat (37 degrees Celsius). Activated by moderate heat (35 to 40 degrees Celsius). Inactivated by exposure to extracellular pH between 4.0 and 6.5; irreversibly inactivated when open channels are exposed to extracellular pH between 4.0 and 6.5, while pre-exposure of closed channels to extracellular pH 5.5 gives rise to currents that rapidly inactivate, but protects against irreversible inactivation. Inactivated by intracellular ATP. Activated by arachidonic acid. Inhibited by 2-aminoethyl diphenylborinate (2-APB). Functionally, nonselective, voltage-independent cation channel that mediates Na(+) and Ca(2+) influx, leading to increased cytoplasmic Ca(2+) levels. Functions as a ligand-gated ion channel, gated by intracellular adenosine diphosphate ribose (ADP-ribose), Ca(2+), warm temperature, and oxidative stress. The precise physiological activators are under debate; the true, physiological activators may be ADP-ribose and ADP-ribose-2'-phosphate. Binding of ADP-ribose to the cytoplasmic Nudix domain causes a conformation change; the channel is primed but still requires Ca(2+) binding to trigger channel opening. Extracellular Ca(2+) passes through the channel and increases channel activity. Contributes to Ca(2+) release from intracellular stores in response to ADP-ribose. Plays a role in numerous processes that involve signaling via intracellular Ca(2+) levels. Besides, mediates the release of lysosomal Zn(2+) stores in response to reactive oxygen species, leading to increased cytosolic Zn(2+) levels. Plays a role in mediating behavorial and physiological responses to moderate heat and thereby contributes to body temperature homeostasis. Plays a role in insulin secretion, a process that requires increased cytoplasmic Ca(2+) levels. Required for normal IFNG and cytokine secretion and normal innate immune immunity in response to bacterial infection. Required for normal phagocytosis and cytokine release by macrophages exposed to zymosan (in vitro). Plays a role in dendritic cell differentiation and maturation, and in dendritic cell chemotaxis via its role in regulating cytoplasmic Ca(2+) levels. Plays a role in the regulation of the reorganization of the actin cytoskeleton and filopodia formation in response to reactive oxygen species via its role in increasing cytoplasmic Ca(2+) and Zn(2+) levels. Confers susceptibility to cell death following oxidative stress. Its function is as follows. Lacks cation channel activity. Does not mediate cation transport in response to oxidative stress or ADP-ribose. Lacks cation channel activity and negatively regulates the channel activity of isoform 1. Negatively regulates susceptibility to cell death in reposponse to oxidative stress. The polypeptide is Transient receptor potential cation channel subfamily M member 2 (TRPM2) (Homo sapiens (Human)).